The sequence spans 535 residues: MAQQSMKVRPVLLKRSSLESVELVKQPHHRRSKSQQVRFKEDGNIKNPTGVTEVNTQTPEDPGVMGKAQASRHHHPTTYSLSFPRSHKAGGFRSISIQTSPSLRKHFPVFKRKKLTTSKSLVEMPTASPSAIQVNGNLSEQDIVSSDLAFLRLAQHLEDGPRRLKIPHPFLPRMPKVQSNGPVSFCLESGTWMSSEKATAAIQVPDDICHSPTWEARESALSPESSAEESNSIPALISMCPGDGQRVMTSELERMPPCSNTNSSASNMPGTEKLTPELLLPKDNPDDKDLGLPSSQSKKMCVPSPPRTHSSPEPGSRSQPVHLGRSSDCPASGDNHQDLESLRSSSASKSVPVCWEHVTKLPSQSDTPELQTGVGSEQLPASIPRQENRAQSSREIGGSNHSHLAQGELCDLQGRLQSVEESLHSNQEKIKVLLNVIQDLEKAHALTEGRNFYRTGQDLNNCSTCQNTACIIYSVEYDFRQQEGRFHEVLQSLEEAEPTEEAPSPPKSPAEAPVPEKQDLRRKSKKVKKKCFWWI.

3 disordered regions span residues 23–85 (LVKQ…SFPR), 215–346 (EARE…RSSS), and 360–387 (KLPSQSDTPELQTGVGSEQLPASIPRQE). Over residues 46-59 (KNPTGVTEVNTQTP) the composition is skewed to polar residues. A compositionally biased stretch (low complexity) spans 219 to 232 (SALSPESSAEESNS). Polar residues-rich tracts occupy residues 258–269 (CSNTNSSASNMP), 307–319 (RTHSSPEPGSRSQ), and 361–375 (LPSQSDTPELQTGVG). A coiled-coil region spans residues 411–448 (DLQGRLQSVEESLHSNQEKIKVLLNVIQDLEKAHALTE). Residues 493-528 (LEEAEPTEEAPSPPKSPAEAPVPEKQDLRRKSKKVK) are disordered.

This sequence belongs to the INSYN2 family.

This chain is INSYN2B protein (Insyn2b), found in Mus musculus (Mouse).